Here is a 172-residue protein sequence, read N- to C-terminus: Adenine phosphoribosyltransferase (172 aa).

It belongs to the purine/pyrimidine phosphoribosyltransferase family. As to quaternary structure, homodimer.

Its subcellular location is the cytoplasm. The catalysed reaction is AMP + diphosphate = 5-phospho-alpha-D-ribose 1-diphosphate + adenine. The protein operates within purine metabolism; AMP biosynthesis via salvage pathway; AMP from adenine: step 1/1. Catalyzes a salvage reaction resulting in the formation of AMP, that is energically less costly than de novo synthesis. This Prochlorococcus marinus (strain MIT 9211) protein is Adenine phosphoribosyltransferase.